The sequence spans 227 residues: Probable maleylacetoacetate isomerase 2 (227 aa).

The GST N-terminal domain maps to 14–97 (IQPILYSYWR…YLEETRPQRP (84 aa)). Glutathione is bound by residues 24 to 29 (SSCSWR), Gln-55, Val-69, 81 to 82 (ES), Gln-121, and 125 to 127 (NLI). The 121-residue stretch at 102–222 (DVHKRAKVRE…HPSNQPDCPP (121 aa)) folds into the GST C-terminal domain.

It belongs to the GST superfamily. Zeta family. Requires glutathione as cofactor.

It localises to the cytoplasm. The enzyme catalyses 4-maleylacetoacetate = 4-fumarylacetoacetate. The catalysed reaction is RX + glutathione = an S-substituted glutathione + a halide anion + H(+). It functions in the pathway amino-acid degradation; L-phenylalanine degradation; acetoacetate and fumarate from L-phenylalanine: step 5/6. In terms of biological role, catalyzes the glutathione dependent oxygenation of dichloroacetic acid to glyoxylic acid in vitro. Has no glutathione thioltransferase activity with 4-hydroxynonenal (4-HNE), adrenochrome, phenethyl isothiocyanate (PEITC), 5-hydroperoxyeicosatetraenoic acid ((5S)-HpETE), prostaglandin A2 (PGA2) or 2-hydroxyethyldisulfide (HED). This is Probable maleylacetoacetate isomerase 2 (GstZ2) from Drosophila melanogaster (Fruit fly).